The chain runs to 272 residues: Large ribosomal subunit protein uL2 (272 aa).

The disordered stretch occupies residues 247–272 (PWGQPCKGFKTRNNKRTNSSIIKRRK). Positions 262–272 (RTNSSIIKRRK) are enriched in polar residues.

It belongs to the universal ribosomal protein uL2 family. As to quaternary structure, part of the 50S ribosomal subunit. Forms a bridge to the 30S subunit in the 70S ribosome.

One of the primary rRNA binding proteins. Required for association of the 30S and 50S subunits to form the 70S ribosome, for tRNA binding and peptide bond formation. It has been suggested to have peptidyltransferase activity; this is somewhat controversial. Makes several contacts with the 16S rRNA in the 70S ribosome. This Bdellovibrio bacteriovorus (strain ATCC 15356 / DSM 50701 / NCIMB 9529 / HD100) protein is Large ribosomal subunit protein uL2.